A 412-amino-acid chain; its full sequence is MEALQKQQAARLAQGVGPLAPACPLLPPQPPLPDHRTLQAPEGALGNVGAEEEEDAEEDEEKREEAGAEEEAAEESRPGAQGPSSPSSQPPGLHPHEWTYEEQFKQLYELDADPKRKEFLDDLFSFMQKRGTPVNRVPIMAKQVLDLYALFRLVTAKGGLVEVINRKVWREVTRGLSLPTTITSAAFTLRTQYMKYLYPYECETRALSSPGELQAAIDSNRREGRRQAYTATPLFGLAGPPPRGAQDPALGPGPAPPATQSSPGPAQGSTSGLPAHACAQLSPSPIKKEESGIPNPCLALPVGLALGPTREKLAPEEPPEKRAVLMGPMDPPRPCMPPSFLPRGKVPLREERLDGPLNLAGSGISSINMALEINGVVYTGVLFARRQPVPASQGPTNPAPPPSTGPPSSILP.

The segment covering 1 to 23 has biased composition (low complexity); it reads MEALQKQQAARLAQGVGPLAPAC. The segment at 1 to 96 is disordered; sequence MEALQKQQAA…SSQPPGLHPH (96 aa). The span at 50 to 73 shows a compositional bias: acidic residues; the sequence is AEEEEDAEEDEEKREEAGAEEEAA. The segment covering 78 to 87 has biased composition (low complexity); that stretch reads PGAQGPSSPS. Positions 113–205 constitute an ARID domain; sequence DPKRKEFLDD…YLYPYECETR (93 aa). 2 disordered regions span residues 232-278 and 388-412; these read TPLF…AHAC and PVPASQGPTNPAPPPSTGPPSSILP. Polar residues predominate over residues 259 to 272; it reads TQSSPGPAQGSTSG. One can recognise an REKLES domain in the interval 304 to 389; the sequence is LALGPTREKL…GVLFARRQPV (86 aa).

As to quaternary structure, interacts (via REKLES DOMAIN) with NPM1; the interaction mediates ARID3C nuclear shuttling.

It localises to the nucleus. Functionally, transcription factor involved in monocyte-to-macrophage differentiation. Forms a complex with NPM1 to translocate to the nucleus, acting as a transcription factor that promotes the expression of the genes involved in macrophage differentiation, such as STAT3, STAT1 and JUNB. The protein is AT-rich interactive domain-containing protein 3C of Homo sapiens (Human).